The chain runs to 163 residues: Nucleotide-binding protein CYA_0935 (163 aa).

Belongs to the YajQ family.

Its function is as follows. Nucleotide-binding protein. This Synechococcus sp. (strain JA-3-3Ab) (Cyanobacteria bacterium Yellowstone A-Prime) protein is Nucleotide-binding protein CYA_0935.